An 89-amino-acid chain; its full sequence is Large ribosomal subunit protein bL28 (89 aa).

The protein belongs to the bacterial ribosomal protein bL28 family.

This is Large ribosomal subunit protein bL28 from Chlamydia abortus (strain DSM 27085 / S26/3) (Chlamydophila abortus).